The sequence spans 706 residues: Elongation factor G (706 aa).

The tr-type G domain maps to 8 to 297; sequence SYVRNIGIGA…AVVDYLPSPN (290 aa). Residues 17-24, 95-99, and 149-152 contribute to the GTP site; these read AHIDAGKT, DTPGH, and NKMD.

This sequence belongs to the TRAFAC class translation factor GTPase superfamily. Classic translation factor GTPase family. EF-G/EF-2 subfamily.

It is found in the cytoplasm. Functionally, catalyzes the GTP-dependent ribosomal translocation step during translation elongation. During this step, the ribosome changes from the pre-translocational (PRE) to the post-translocational (POST) state as the newly formed A-site-bound peptidyl-tRNA and P-site-bound deacylated tRNA move to the P and E sites, respectively. Catalyzes the coordinated movement of the two tRNA molecules, the mRNA and conformational changes in the ribosome. The protein is Elongation factor G of Orientia tsutsugamushi (strain Boryong) (Rickettsia tsutsugamushi).